Consider the following 356-residue polypeptide: Tungsten-containing aldehyde ferredoxin oxidoreductase cofactor-modifying protein (356 aa).

The region spanning 1-214 (MKYLYLEITS…PIVNELYKIA (214 aa)) is the Radical SAM core domain. [4Fe-4S] cluster contacts are provided by Cys12, Cys16, and Cys19.

It belongs to the radical SAM superfamily. [4Fe-4S] cluster serves as cofactor.

Functionally, involved in the biosynthesis of a molybdopterin-based tungsten cofactor. This Pyrococcus furiosus (strain ATCC 43587 / DSM 3638 / JCM 8422 / Vc1) protein is Tungsten-containing aldehyde ferredoxin oxidoreductase cofactor-modifying protein (cmo).